The chain runs to 286 residues: MIYQTDNDKLYRYLFKDRAVRGEWVRLNKTFTDTLNSHEYPRIVRNLLGEMMVATNLLTATLKFKGNITIQIQGNGPLKLLLVNGSDSQQIRALARLQDDVYDDITLSELVGNGILVITIAPTNGERYQGVIALDKPTIAECLEDYFIRSEQLQTQLLIRSGEYEGKPVAAGLLLQIMPDGTGSQEDFEHLATLAATVKNEELFGLTAEELLYRLYHEETVEIYPPSAVEFHCGCSLERSGSALLLISDDEIENILTEHGGSIDMQCECCGTHYFFDKKTIEKLKA.

Disulfide bonds link C233-C235 and C267-C270.

This sequence belongs to the HSP33 family. Under oxidizing conditions two disulfide bonds are formed involving the reactive cysteines. Under reducing conditions zinc is bound to the reactive cysteines and the protein is inactive.

The protein localises to the cytoplasm. Redox regulated molecular chaperone. Protects both thermally unfolding and oxidatively damaged proteins from irreversible aggregation. Plays an important role in the bacterial defense system toward oxidative stress. The protein is 33 kDa chaperonin of Histophilus somni (strain 2336) (Haemophilus somnus).